A 356-amino-acid polypeptide reads, in one-letter code: Peptide chain release factor 1 (356 aa).

Residue Gln-232 is modified to N5-methylglutamine. The interval 281 to 301 (ERQSSELSADRKAQVGSGDRS) is disordered.

It belongs to the prokaryotic/mitochondrial release factor family. In terms of processing, methylated by PrmC. Methylation increases the termination efficiency of RF1.

It localises to the cytoplasm. Peptide chain release factor 1 directs the termination of translation in response to the peptide chain termination codons UAG and UAA. This Desulfovibrio desulfuricans (strain ATCC 27774 / DSM 6949 / MB) protein is Peptide chain release factor 1.